Reading from the N-terminus, the 138-residue chain is Beta-lactamase HcpB (138 aa).

3 TPR repeats span residues 1-28, 57-94, and 97-130; these read MVGG…NEMF, GNGC…NDQD, and LILG…GSED. 4 disulfides stabilise this stretch: Cys-22–Cys-30, Cys-52–Cys-60, Cys-88–Cys-96, and Cys-124–Cys-132.

The protein belongs to the hcp beta-lactamase family.

The catalysed reaction is a beta-lactam + H2O = a substituted beta-amino acid. In terms of biological role, hydrolyzes 6-aminopenicillinic acid and 7-aminocephalosporanic acid (ACA) derivatives. This chain is Beta-lactamase HcpB (hcpB), found in Helicobacter pylori (strain ATCC 700392 / 26695) (Campylobacter pylori).